Here is a 202-residue protein sequence, read N- to C-terminus: Myosin regulatory light chain 10 (202 aa).

The disordered stretch occupies residues 1–21; that stretch reads MGQSSLDHGVQGPVAGTGDFG. 3 consecutive EF-hand domains span residues 60-95, 130-165, and 166-201; these read SQIQ…LGRI, DPEE…QADR, and FSEE…GEEK. Ca(2+)-binding residues include Asp73, Asn75, Asp77, and Asp84.

In terms of assembly, myosin is a hexamer of 2 heavy chains and 4 light chains. Specifically expressed in precursor B- and T-lymphocytes.

This chain is Myosin regulatory light chain 10 (Myl10), found in Mus musculus (Mouse).